Reading from the N-terminus, the 548-residue chain is Transcriptional adapter ADA2a (548 aa).

Residues 1–30 (MGRSKLASRPAEEDLNPGKSKRKKISLGPE) are disordered. The segment at 48–104 (PGLYCCNYCDKDLSGLVRFKCAVCMDFDLCVECFSVGVELNRHKNSHPYRVMDNLSF) adopts a ZZ-type zinc-finger fold. The Zn(2+) site is built by Cys-53, Cys-56, Cys-68, Cys-71, Cys-77, Cys-80, His-90, and His-94. The 53-residue stretch at 106 to 158 (LVTSDWNADEEILLLEAIATYGFGNWKEVADHVGSKTTTECIKHFNSAYMQSP) folds into the SANT domain. Lys-257 carries the post-translational modification N6-acetyllysine; by GCN5. Residues 365–386 (QSKEEHKELIKKVIEEHQILRR) adopt a coiled-coil conformation. Positions 461–548 (PRIYSGLDTW…LVHKGIGDST (88 aa)) constitute an SWIRM domain.

As to quaternary structure, interacts in vitro with the HAT domain of GCN5 and with the DNA-binding domain of the transcriptional activator DREB1B/CBF1. Post-translationally, acetylated in vitro by GCN5, but acetylation is not essential for biological activity. Expressed in roots and leaves.

The protein localises to the nucleus. Required for the function of some acidic activation domains, which activate transcription from a distant site. The exact mechanism of action is not yet known. ADA2 stimulates the acetyltransferase activity of GCN5 on free histones or nucleosomes, probably by opening up the promoter region. The sequence is that of Transcriptional adapter ADA2a (ADA2A) from Arabidopsis thaliana (Mouse-ear cress).